The chain runs to 333 residues: Uroporphyrinogen decarboxylase (333 aa).

Residues 21 to 25, D70, Y139, S194, and H309 contribute to the substrate site; that span reads RQVGR.

Belongs to the uroporphyrinogen decarboxylase family. As to quaternary structure, homodimer.

The protein resides in the cytoplasm. The catalysed reaction is uroporphyrinogen III + 4 H(+) = coproporphyrinogen III + 4 CO2. It participates in porphyrin-containing compound metabolism; protoporphyrin-IX biosynthesis; coproporphyrinogen-III from 5-aminolevulinate: step 4/4. In terms of biological role, catalyzes the decarboxylation of four acetate groups of uroporphyrinogen-III to yield coproporphyrinogen-III. The sequence is that of Uroporphyrinogen decarboxylase from Chlamydia caviae (strain ATCC VR-813 / DSM 19441 / 03DC25 / GPIC) (Chlamydophila caviae).